The chain runs to 661 residues: Acetyl-coenzyme A synthetase (661 aa).

Residues 197–200 (RGGK) and Thr-320 contribute to the CoA site. ATP contacts are provided by residues 396–398 (GEP), 420–425 (DTWWQT), Asp-511, and Arg-526. Residue Ser-534 participates in CoA binding. Arg-537 serves as a coordination point for ATP. Mg(2+) is bound by residues Val-548 and Val-553. Lys-620 bears the N6-acetyllysine mark.

The protein belongs to the ATP-dependent AMP-binding enzyme family. The cofactor is Mg(2+). In terms of processing, acetylated. Deacetylation by the SIR2-homolog deacetylase activates the enzyme.

The enzyme catalyses acetate + ATP + CoA = acetyl-CoA + AMP + diphosphate. Its function is as follows. Catalyzes the conversion of acetate into acetyl-CoA (AcCoA), an essential intermediate at the junction of anabolic and catabolic pathways. AcsA undergoes a two-step reaction. In the first half reaction, AcsA combines acetate with ATP to form acetyl-adenylate (AcAMP) intermediate. In the second half reaction, it can then transfer the acetyl group from AcAMP to the sulfhydryl group of CoA, forming the product AcCoA. The protein is Acetyl-coenzyme A synthetase of Leptospira interrogans serogroup Icterohaemorrhagiae serovar Lai (strain 56601).